The following is a 740-amino-acid chain: Ion-translocating oxidoreductase complex subunit C (740 aa).

4Fe-4S ferredoxin-type domains lie at 369 to 397 (GEPQ…QQLY) and 407 to 436 (KATT…VQYF). Cys-377, Cys-380, Cys-383, Cys-387, Cys-416, Cys-419, Cys-422, and Cys-426 together coordinate [4Fe-4S] cluster. Residues 602–718 (KLEQQQANAE…EEQVDPRKAA (117 aa)) form a disordered region.

It belongs to the 4Fe4S bacterial-type ferredoxin family. RnfC subfamily. As to quaternary structure, the complex is composed of six subunits: RsxA, RsxB, RsxC, RsxD, RsxE and RsxG. [4Fe-4S] cluster serves as cofactor.

It localises to the cell inner membrane. Its function is as follows. Part of a membrane-bound complex that couples electron transfer with translocation of ions across the membrane. Required to maintain the reduced state of SoxR. The chain is Ion-translocating oxidoreductase complex subunit C from Shigella sonnei (strain Ss046).